The sequence spans 306 residues: Recombination-associated protein RdgC (306 aa).

This sequence belongs to the RdgC family.

It is found in the cytoplasm. The protein localises to the nucleoid. Its function is as follows. May be involved in recombination. This Pseudomonas syringae pv. tomato (strain ATCC BAA-871 / DC3000) protein is Recombination-associated protein RdgC.